The sequence spans 319 residues: GTP 3',8-cyclase (319 aa).

Residues 4–219 enclose the Radical SAM core domain; sequence KHGRKINYLR…SKHSDLIPVE (216 aa). Position 13 (arginine 13) interacts with GTP. [4Fe-4S] cluster is bound by residues cysteine 20 and cysteine 24. Tyrosine 26 is an S-adenosyl-L-methionine binding site. Residue cysteine 27 coordinates [4Fe-4S] cluster. Residue arginine 63 participates in GTP binding. Glycine 67 provides a ligand contact to S-adenosyl-L-methionine. GTP is bound at residue threonine 94. Serine 118 serves as a coordination point for S-adenosyl-L-methionine. Lysine 155 provides a ligand contact to GTP. Methionine 189 contacts S-adenosyl-L-methionine. 2 residues coordinate [4Fe-4S] cluster: cysteine 249 and cysteine 252. A GTP-binding site is contributed by 254-256; it reads RVR. Position 266 (cysteine 266) interacts with [4Fe-4S] cluster.

Belongs to the radical SAM superfamily. MoaA family. In terms of assembly, monomer and homodimer. [4Fe-4S] cluster is required as a cofactor.

It catalyses the reaction GTP + AH2 + S-adenosyl-L-methionine = (8S)-3',8-cyclo-7,8-dihydroguanosine 5'-triphosphate + 5'-deoxyadenosine + L-methionine + A + H(+). It functions in the pathway cofactor biosynthesis; molybdopterin biosynthesis. In terms of biological role, catalyzes the cyclization of GTP to (8S)-3',8-cyclo-7,8-dihydroguanosine 5'-triphosphate. The protein is GTP 3',8-cyclase of Clostridium botulinum (strain Okra / Type B1).